Reading from the N-terminus, the 358-residue chain is Putative zinc metalloprotease BH06270 (358 aa).

Residue His-7 coordinates Zn(2+). Residue Glu-8 is part of the active site. Zn(2+) is bound at residue His-11. A run of 3 helical transmembrane segments spans residues 89–111 (ATVFAGPLFNVLFTVVILTFFFF), 282–304 (FLSLLNFTAFLSIGVGLINLFPI), and 332–354 (IIFRLGLCFVLLFMFFALFNDYF). The PDZ domain maps to 102–177 (TVVILTFFFF…IEFKMERSGQ (76 aa)).

It belongs to the peptidase M50B family. It depends on Zn(2+) as a cofactor.

The protein resides in the cell inner membrane. This is Putative zinc metalloprotease BH06270 from Bartonella henselae (strain ATCC 49882 / DSM 28221 / CCUG 30454 / Houston 1) (Rochalimaea henselae).